The chain runs to 498 residues: Bifunctional protein GlmU (498 aa).

Positions 1-238 are pyrophosphorylase; the sequence is MSDAAVVILA…PALVAGVNDR (238 aa). Residues 9 to 12, Lys23, Gln80, and 85 to 86 each bind UDP-N-acetyl-alpha-D-glucosamine; these read LAAG and GT. Mg(2+) is bound at residue Asp111. UDP-N-acetyl-alpha-D-glucosamine is bound by residues Gly148, Glu163, Asn178, and Asn236. Position 236 (Asn236) interacts with Mg(2+). The tract at residues 239 to 259 is linker; it reads VQLADLGAELNRRVVAAHQRA. The segment at 260–498 is N-acetyltransferase; it reads GVTIVDPATT…TAKPAPATGE (239 aa). UDP-N-acetyl-alpha-D-glucosamine contacts are provided by Arg341 and Lys359. The Proton acceptor role is filled by His371. Residues Tyr374 and Asn385 each contribute to the UDP-N-acetyl-alpha-D-glucosamine site. Residues Ala388, 394–395, Ser413, and Ala431 contribute to the acetyl-CoA site; that span reads NY. Residues 470–498 are disordered; sequence AAEAAAADGDTAAADRAAATAKPAPATGE.

This sequence in the N-terminal section; belongs to the N-acetylglucosamine-1-phosphate uridyltransferase family. The protein in the C-terminal section; belongs to the transferase hexapeptide repeat family. Homotrimer. Requires Mg(2+) as cofactor.

Its subcellular location is the cytoplasm. The enzyme catalyses alpha-D-glucosamine 1-phosphate + acetyl-CoA = N-acetyl-alpha-D-glucosamine 1-phosphate + CoA + H(+). The catalysed reaction is N-acetyl-alpha-D-glucosamine 1-phosphate + UTP + H(+) = UDP-N-acetyl-alpha-D-glucosamine + diphosphate. It functions in the pathway nucleotide-sugar biosynthesis; UDP-N-acetyl-alpha-D-glucosamine biosynthesis; N-acetyl-alpha-D-glucosamine 1-phosphate from alpha-D-glucosamine 6-phosphate (route II): step 2/2. The protein operates within nucleotide-sugar biosynthesis; UDP-N-acetyl-alpha-D-glucosamine biosynthesis; UDP-N-acetyl-alpha-D-glucosamine from N-acetyl-alpha-D-glucosamine 1-phosphate: step 1/1. Its pathway is bacterial outer membrane biogenesis; LPS lipid A biosynthesis. In terms of biological role, catalyzes the last two sequential reactions in the de novo biosynthetic pathway for UDP-N-acetylglucosamine (UDP-GlcNAc). The C-terminal domain catalyzes the transfer of acetyl group from acetyl coenzyme A to glucosamine-1-phosphate (GlcN-1-P) to produce N-acetylglucosamine-1-phosphate (GlcNAc-1-P), which is converted into UDP-GlcNAc by the transfer of uridine 5-monophosphate (from uridine 5-triphosphate), a reaction catalyzed by the N-terminal domain. This is Bifunctional protein GlmU from Mycolicibacterium gilvum (strain PYR-GCK) (Mycobacterium gilvum (strain PYR-GCK)).